A 187-amino-acid chain; its full sequence is Cytochrome b-245 chaperone 1 (187 aa).

Residues 20-42 (GIRSWSLLVGILSIGLAAAYYSG) form a helical membrane-spanning segment. S168 carries the post-translational modification Phosphoserine.

This sequence belongs to the CYBC1 family. As to quaternary structure, interacts with CYBB; CYBC1 may act as a chaperone stabilizing Cytochrome b-245 heterodimer.

The protein resides in the endoplasmic reticulum membrane. Functions as a chaperone necessary for a stable expression of the CYBA and CYBB subunits of the cytochrome b-245 heterodimer. Controls the phagocyte respiratory burst and is essential for innate immunity. The polypeptide is Cytochrome b-245 chaperone 1 (Bos taurus (Bovine)).